The primary structure comprises 382 residues: Putative NADPH dehydrogenase C5H10.04 (382 aa).

Residues Thr-28 and His-189 each contribute to the FMN site. The substrate site is built by His-189 and Asn-192. Arg-242 and Arg-334 together coordinate FMN. Tyr-361 lines the substrate pocket.

It belongs to the NADH:flavin oxidoreductase/NADH oxidase family. Homodimer or heterodimer. Requires FMN as cofactor.

It carries out the reaction A + NADPH + H(+) = AH2 + NADP(+). The protein is Putative NADPH dehydrogenase C5H10.04 of Schizosaccharomyces pombe (strain 972 / ATCC 24843) (Fission yeast).